A 277-amino-acid chain; its full sequence is NH(3)-dependent NAD(+) synthetase (277 aa).

36–43 contacts ATP; sequence GLSGGIDS. Asp-42 contributes to the Mg(2+) binding site. Arg-118 lines the deamido-NAD(+) pocket. An ATP-binding site is contributed by Thr-138. A Mg(2+)-binding site is contributed by Glu-143. ATP-binding residues include Lys-167 and Ser-189.

The protein belongs to the NAD synthetase family. Homodimer.

It catalyses the reaction deamido-NAD(+) + NH4(+) + ATP = AMP + diphosphate + NAD(+) + H(+). It functions in the pathway cofactor biosynthesis; NAD(+) biosynthesis; NAD(+) from deamido-NAD(+) (ammonia route): step 1/1. Functionally, catalyzes the ATP-dependent amidation of deamido-NAD to form NAD. Uses ammonia as a nitrogen source. The sequence is that of NH(3)-dependent NAD(+) synthetase from Chlorobium phaeobacteroides (strain DSM 266 / SMG 266 / 2430).